Here is a 544-residue protein sequence, read N- to C-terminus: Chaperonin GroEL (544 aa).

ATP contacts are provided by residues Thr-30–Pro-33, Lys-51, Asp-87–Thr-91, Gly-415, Asn-479–Ala-481, and Asp-495.

It belongs to the chaperonin (HSP60) family. Forms a cylinder of 14 subunits composed of two heptameric rings stacked back-to-back. Interacts with the co-chaperonin GroES.

The protein localises to the cytoplasm. The catalysed reaction is ATP + H2O + a folded polypeptide = ADP + phosphate + an unfolded polypeptide.. In terms of biological role, together with its co-chaperonin GroES, plays an essential role in assisting protein folding. The GroEL-GroES system forms a nano-cage that allows encapsulation of the non-native substrate proteins and provides a physical environment optimized to promote and accelerate protein folding. The protein is Chaperonin GroEL of Francisella tularensis subsp. novicida (strain U112).